The primary structure comprises 1147 residues: GPI inositol-deacylase (1147 aa).

Residues Met1 to Leu94 form a disordered region. Residue Asn23 is glycosylated (N-linked (GlcNAc...) asparagine). Over residues Ser28–Asp49 the composition is skewed to basic and acidic residues. A compositionally biased stretch (low complexity) spans Arg50–Ile63. The N-linked (GlcNAc...) asparagine glycan is linked to Asn74. A helical membrane pass occupies residues Ala127–Leu147. Ser310 is a catalytic residue. The next 2 helical transmembrane spans lie at Leu795–Leu815 and Ile843–Ala863. 2 N-linked (GlcNAc...) asparagine glycosylation sites follow: Asn865 and Asn873. 3 helical membrane passes run Pro893–Phe913, Leu918–Ile938, and Val965–Leu985. Asn1011 is a glycosylation site (N-linked (GlcNAc...) asparagine). 3 helical membrane passes run Ser1015–Val1035, Val1052–Pro1072, and Leu1084–Leu1104.

It belongs to the GPI inositol-deacylase family.

The protein resides in the endoplasmic reticulum membrane. Functionally, involved in inositol deacylation of GPI-anchored proteins which plays important roles in the quality control and ER-associated degradation of GPI-anchored proteins. In Chaetomium globosum (strain ATCC 6205 / CBS 148.51 / DSM 1962 / NBRC 6347 / NRRL 1970) (Soil fungus), this protein is GPI inositol-deacylase (BST1).